A 429-amino-acid polypeptide reads, in one-letter code: Glutamate-1-semialdehyde 2,1-aminomutase (429 aa).

Lys265 carries the post-translational modification N6-(pyridoxal phosphate)lysine.

It belongs to the class-III pyridoxal-phosphate-dependent aminotransferase family. HemL subfamily. Homodimer. Requires pyridoxal 5'-phosphate as cofactor.

The protein resides in the cytoplasm. It carries out the reaction (S)-4-amino-5-oxopentanoate = 5-aminolevulinate. Its pathway is porphyrin-containing compound metabolism; protoporphyrin-IX biosynthesis; 5-aminolevulinate from L-glutamyl-tRNA(Glu): step 2/2. This is Glutamate-1-semialdehyde 2,1-aminomutase from Alkalilimnicola ehrlichii (strain ATCC BAA-1101 / DSM 17681 / MLHE-1).